The primary structure comprises 790 residues: Endonuclease MutS2 (790 aa).

An ATP-binding site is contributed by 334–341 (GPNTGGKT). The Smr domain maps to 715 to 790 (IDVRGQNLEE…GMGVTIVHLK (76 aa)).

Belongs to the DNA mismatch repair MutS family. MutS2 subfamily. In terms of assembly, homodimer. Binds to stalled ribosomes, contacting rRNA.

In terms of biological role, endonuclease that is involved in the suppression of homologous recombination and thus may have a key role in the control of bacterial genetic diversity. Acts as a ribosome collision sensor, splitting the ribosome into its 2 subunits. Detects stalled/collided 70S ribosomes which it binds and splits by an ATP-hydrolysis driven conformational change. Acts upstream of the ribosome quality control system (RQC), a ribosome-associated complex that mediates the extraction of incompletely synthesized nascent chains from stalled ribosomes and their subsequent degradation. Probably generates substrates for RQC. The polypeptide is Endonuclease MutS2 (Alkaliphilus oremlandii (strain OhILAs) (Clostridium oremlandii (strain OhILAs))).